A 544-amino-acid chain; its full sequence is Membrane protein insertase YidC (544 aa).

Residues 6-26 (NLLLIALLFVTFMLWQAWETD) traverse the membrane as a helical segment. Residues 112-132 (SGLTGKNGPDNPANGPRPLFT) are disordered. The next 4 helical transmembrane spans lie at 343 to 363 (KFLH…TFIV), 418 to 438 (LGGC…YYML), 456 to 476 (LSAQ…MFFI), and 497 to 517 (PVIF…YYIV).

Belongs to the OXA1/ALB3/YidC family. Type 1 subfamily. Interacts with the Sec translocase complex via SecD. Specifically interacts with transmembrane segments of nascent integral membrane proteins during membrane integration.

It is found in the cell inner membrane. Required for the insertion and/or proper folding and/or complex formation of integral membrane proteins into the membrane. Involved in integration of membrane proteins that insert both dependently and independently of the Sec translocase complex, as well as at least some lipoproteins. Aids folding of multispanning membrane proteins. This chain is Membrane protein insertase YidC, found in Pectobacterium carotovorum subsp. carotovorum (strain PC1).